Consider the following 134-residue polypeptide: Small ribosomal subunit protein uS11 (134 aa).

The disordered stretch occupies residues 114–134; the sequence is TPVPHNGTRPPRKWFKRQEKR. Basic residues predominate over residues 123–134; sequence PPRKWFKRQEKR.

This sequence belongs to the universal ribosomal protein uS11 family. Part of the 30S ribosomal subunit. Interacts with proteins S7 and S18. Binds to IF-3.

In terms of biological role, located on the platform of the 30S subunit, it bridges several disparate RNA helices of the 16S rRNA. Forms part of the Shine-Dalgarno cleft in the 70S ribosome. In Mesomycoplasma hyopneumoniae (strain J / ATCC 25934 / NCTC 10110) (Mycoplasma hyopneumoniae), this protein is Small ribosomal subunit protein uS11.